The chain runs to 529 residues: Protein PAT1 homolog 2 (529 aa).

Positions 153–183 (QILQQQQRWRRRRSPTARSVPAQKPWSREPA) are disordered.

It belongs to the PAT1 family. In terms of assembly, interacts with LSM1.

The protein localises to the cytoplasm. It is found in the nucleus. In terms of biological role, RNA-binding protein that acts as a translational repressor. In Mus musculus (Mouse), this protein is Protein PAT1 homolog 2 (Patl2).